The sequence spans 408 residues: Translation initiation factor 2 subunit gamma (408 aa).

The tr-type G domain maps to 4–201; the sequence is QSEINIGLVG…TIEERIKTPK (198 aa). The G1 stretch occupies residues 13-20; it reads GHVDHGKT. Aspartate 16, threonine 20, glycine 41, and serine 43 together coordinate Mg(2+). A GTP-binding site is contributed by 16–21; the sequence is DHGKTT. The tract at residues 41–45 is G2; the sequence is GISIR. Zn(2+) contacts are provided by cysteine 56, cysteine 59, cysteine 71, and cysteine 74. Residues 88-91 form a G3 region; that stretch reads DAPG. Residues 144–147 and 179–181 each bind GTP; these read NKID and SAQ. Positions 144–147 are G4; the sequence is NKID. Positions 179 to 181 are G5; the sequence is SAQ.

Belongs to the TRAFAC class translation factor GTPase superfamily. Classic translation factor GTPase family. EIF2G subfamily. As to quaternary structure, heterotrimer composed of an alpha, a beta and a gamma chain. Mg(2+) serves as cofactor.

It carries out the reaction GTP + H2O = GDP + phosphate + H(+). In terms of biological role, eIF-2 functions in the early steps of protein synthesis by forming a ternary complex with GTP and initiator tRNA. The polypeptide is Translation initiation factor 2 subunit gamma (Methanothermobacter thermautotrophicus (strain ATCC 29096 / DSM 1053 / JCM 10044 / NBRC 100330 / Delta H) (Methanobacterium thermoautotrophicum)).